The following is a 491-amino-acid chain: Ketol-acid reductoisomerase (NADP(+)) (491 aa).

Residues 15–208 (AQLGKCRFMG…GGHRAGVLES (194 aa)) enclose the KARI N-terminal Rossmann domain. Residues 45-48 (CGAQ), arginine 68, arginine 76, serine 78, and 108-110 (DKQ) contribute to the NADP(+) site. Residue histidine 132 is part of the active site. Position 158 (glycine 158) interacts with NADP(+). KARI C-terminal knotted domains lie at 209–344 (SFVA…TAPQ) and 345–484 (FEGK…MTDM). Mg(2+)-binding residues include aspartate 217, glutamate 221, glutamate 389, and glutamate 393. Serine 414 is a binding site for substrate.

Belongs to the ketol-acid reductoisomerase family. Mg(2+) serves as cofactor.

The catalysed reaction is (2R)-2,3-dihydroxy-3-methylbutanoate + NADP(+) = (2S)-2-acetolactate + NADPH + H(+). The enzyme catalyses (2R,3R)-2,3-dihydroxy-3-methylpentanoate + NADP(+) = (S)-2-ethyl-2-hydroxy-3-oxobutanoate + NADPH + H(+). The protein operates within amino-acid biosynthesis; L-isoleucine biosynthesis; L-isoleucine from 2-oxobutanoate: step 2/4. It functions in the pathway amino-acid biosynthesis; L-valine biosynthesis; L-valine from pyruvate: step 2/4. Functionally, involved in the biosynthesis of branched-chain amino acids (BCAA). Catalyzes an alkyl-migration followed by a ketol-acid reduction of (S)-2-acetolactate (S2AL) to yield (R)-2,3-dihydroxy-isovalerate. In the isomerase reaction, S2AL is rearranged via a Mg-dependent methyl migration to produce 3-hydroxy-3-methyl-2-ketobutyrate (HMKB). In the reductase reaction, this 2-ketoacid undergoes a metal-dependent reduction by NADPH to yield (R)-2,3-dihydroxy-isovalerate. This chain is Ketol-acid reductoisomerase (NADP(+)), found in Salmonella agona (strain SL483).